Here is a 304-residue protein sequence, read N- to C-terminus: Glycine--tRNA ligase alpha subunit (304 aa).

The protein belongs to the class-II aminoacyl-tRNA synthetase family. In terms of assembly, tetramer of two alpha and two beta subunits.

It localises to the cytoplasm. It carries out the reaction tRNA(Gly) + glycine + ATP = glycyl-tRNA(Gly) + AMP + diphosphate. This chain is Glycine--tRNA ligase alpha subunit, found in Photorhabdus laumondii subsp. laumondii (strain DSM 15139 / CIP 105565 / TT01) (Photorhabdus luminescens subsp. laumondii).